A 376-amino-acid chain; its full sequence is UDP-N-acetylglucosamine--N-acetylmuramyl-(pentapeptide) pyrophosphoryl-undecaprenol N-acetylglucosamine transferase (376 aa).

UDP-N-acetyl-alpha-D-glucosamine-binding positions include 11-13 (TGG), Asn-117, Arg-160, Ser-208, and Gln-310.

The protein belongs to the glycosyltransferase 28 family. MurG subfamily.

Its subcellular location is the cell inner membrane. It carries out the reaction di-trans,octa-cis-undecaprenyl diphospho-N-acetyl-alpha-D-muramoyl-L-alanyl-D-glutamyl-meso-2,6-diaminopimeloyl-D-alanyl-D-alanine + UDP-N-acetyl-alpha-D-glucosamine = di-trans,octa-cis-undecaprenyl diphospho-[N-acetyl-alpha-D-glucosaminyl-(1-&gt;4)]-N-acetyl-alpha-D-muramoyl-L-alanyl-D-glutamyl-meso-2,6-diaminopimeloyl-D-alanyl-D-alanine + UDP + H(+). It functions in the pathway cell wall biogenesis; peptidoglycan biosynthesis. Functionally, cell wall formation. Catalyzes the transfer of a GlcNAc subunit on undecaprenyl-pyrophosphoryl-MurNAc-pentapeptide (lipid intermediate I) to form undecaprenyl-pyrophosphoryl-MurNAc-(pentapeptide)GlcNAc (lipid intermediate II). This chain is UDP-N-acetylglucosamine--N-acetylmuramyl-(pentapeptide) pyrophosphoryl-undecaprenol N-acetylglucosamine transferase, found in Rickettsia massiliae (strain Mtu5).